Consider the following 268-residue polypeptide: Ribosomal RNA small subunit methyltransferase A (268 aa).

Residues Asn16, Leu18, Gly43, Glu64, Asp89, and Asn110 each contribute to the S-adenosyl-L-methionine site.

It belongs to the class I-like SAM-binding methyltransferase superfamily. rRNA adenine N(6)-methyltransferase family. RsmA subfamily.

Its subcellular location is the cytoplasm. It catalyses the reaction adenosine(1518)/adenosine(1519) in 16S rRNA + 4 S-adenosyl-L-methionine = N(6)-dimethyladenosine(1518)/N(6)-dimethyladenosine(1519) in 16S rRNA + 4 S-adenosyl-L-homocysteine + 4 H(+). Its function is as follows. Specifically dimethylates two adjacent adenosines (A1518 and A1519) in the loop of a conserved hairpin near the 3'-end of 16S rRNA in the 30S particle. May play a critical role in biogenesis of 30S subunits. This chain is Ribosomal RNA small subunit methyltransferase A, found in Pseudomonas syringae pv. tomato (strain ATCC BAA-871 / DC3000).